The sequence spans 81 residues: Cortexin-2 (81 aa).

A helical transmembrane segment spans residues 29 to 49 (TGFAFVGILCIFLGLLIIRCF).

This sequence belongs to the cortexin family.

The protein resides in the membrane. The protein is Cortexin-2 (Ctxn2) of Mus musculus (Mouse).